A 195-amino-acid polypeptide reads, in one-letter code: Penicillin-binding protein activator LpoB (195 aa).

The signal sequence occupies residues 1–16 (MKKRALIVLAALVLAS). Cys17 carries N-palmitoyl cysteine lipidation. Cys17 carries the S-diacylglycerol cysteine lipid modification. The segment at 19–51 (SRKPASPPAPIEPVPPPVTVSVQPPPPATSEPV) is disordered. Positions 23 to 51 (ASPPAPIEPVPPPVTVSVQPPPPATSEPV) are enriched in pro residues.

It belongs to the LpoB family. As to quaternary structure, interacts with PBP1b.

It is found in the cell outer membrane. Regulator of peptidoglycan synthesis that is essential for the function of penicillin-binding protein 1B (PBP1b). In Sodalis glossinidius (strain morsitans), this protein is Penicillin-binding protein activator LpoB.